A 355-amino-acid polypeptide reads, in one-letter code: Acyl-CoA desaturase 1 (355 aa).

Topologically, residues 1 to 68 are cytoplasmic; that stretch reads MPAHMLQEIS…EGPPPKLEYV (68 aa). Over residues 9 to 20 the composition is skewed to low complexity; it reads ISSSYTTTTTIT. The disordered stretch occupies residues 9 to 33; sequence ISSSYTTTTTITAPPSGNEREKVKT. The chain crosses the membrane as a helical span at residues 69 to 89; the sequence is WRNIILMVLLHLGGLYGIILV. Asparagine 71 contacts substrate. Residues 90-93 are Lumenal-facing; sequence PSCK. The helical transmembrane segment at 94 to 114 threads the bilayer; that stretch reads LYTCLFGIFYYMTSALGITAG. Over 115–213 the chain is Cytoplasmic; that stretch reads AHRLWSHRTY…EKLVMFQRRY (99 aa). Residues histidine 116 and histidine 121 each contribute to the Fe cation site. The Histidine box-1 motif lies at 116-121; it reads HRLWSH. Residues asparagine 144, arginine 151, and aspartate 152 each contribute to the substrate site. Residues histidine 153, histidine 156, and histidine 157 each contribute to the Fe cation site. Residues 153–157 carry the Histidine box-2 motif; the sequence is HRAHH. Arginine 184 and lysine 185 together coordinate substrate. The helical transmembrane segment at 214–233 threads the bilayer; the sequence is YKPGLLLMCFILPTLVPWYC. At 234–237 the chain is on the lumenal side; that stretch reads WGET. A helical membrane pass occupies residues 238 to 259; that stretch reads FVNSLFVSTFLRYTLVLNATWL. Tryptophan 258 is a substrate binding site. At 260 to 355 the chain is on the cytoplasmic side; sequence VNSAAHLYGY…RTGDGSHKSS (96 aa). 4 residues coordinate Fe cation: histidine 265, histidine 294, histidine 297, and histidine 298. Positions 294 to 298 match the Histidine box-3 motif; that stretch reads HNYHH.

It belongs to the fatty acid desaturase type 1 family. Fe(2+) is required as a cofactor. As to expression, detected in liver (at protein level). Detected in skin and liver. Detected in sebaceous gland, but not in hair follicle. Detected in white and brown adipose tissue, eyelid, Harderian gland, and at lower levels in Meibomian gland, eyeball and adrenal gland. Highly expressed in liver, and detected at low levels in brain, heart, lung, stomach, skeletal muscle and kidney.

The protein localises to the endoplasmic reticulum membrane. It is found in the microsome membrane. The enzyme catalyses octadecanoyl-CoA + 2 Fe(II)-[cytochrome b5] + O2 + 2 H(+) = (9Z)-octadecenoyl-CoA + 2 Fe(III)-[cytochrome b5] + 2 H2O. Functionally, stearoyl-CoA desaturase that utilizes O(2) and electrons from reduced cytochrome b5 to introduce the first double bond into saturated fatty acyl-CoA substrates. Catalyzes the insertion of a cis double bond at the Delta-9 position into fatty acyl-CoA substrates including palmitoyl-CoA and stearoyl-CoA. Gives rise to a mixture of 16:1 and 18:1 unsaturated fatty acids. Plays an important role in lipid biosynthesis. Plays an important role in regulating the expression of genes that are involved in lipogenesis and in regulating mitochondrial fatty acid oxidation. Plays an important role in body energy homeostasis. Contributes to the biosynthesis of membrane phospholipids, cholesterol esters and triglycerides. Required for normal development of sebaceous glands. Required for the biosynthesis of normal levels of Delta-9 unsaturated fatty acids and 1-alkyl-2,3-diacylglycerol in the Harderian gland. Required for normal production of meibum, an oily material that prevents drying of the cornea. This is Acyl-CoA desaturase 1 (Scd1) from Mus musculus (Mouse).